A 168-amino-acid chain; its full sequence is I-Kappa-B like protein G2 (168 aa).

2 ANK repeats span residues S56–G88 and G93–A123.

This sequence belongs to the polydnaviridae I-Kappa-B-like protein family.

Its function is as follows. Suppresses the host immune response through NF-kappa-B inactivation. Possesses ankyrin repeat domains required for NF-kappa-B binding but lacks the regulatory regions required for dissociation from NF-kappa-B and degradation. Therefore, prevents host NF-kappa-B release and subsequent activation. The sequence is that of I-Kappa-B like protein G2 (G4) from Microplitis demolitor (Parasitoid wasp).